The primary structure comprises 470 residues: Poly(A) polymerase catalytic subunit (470 aa).

Active-site residues include Asp192 and Asp194.

The protein belongs to the poxviridae poly(A) polymerase catalytic subunit family. As to quaternary structure, heterodimer of a large (catalytic) subunit and a small (regulatory) subunit.

The catalysed reaction is RNA(n) + ATP = RNA(n)-3'-adenine ribonucleotide + diphosphate. Its function is as follows. Polymerase that creates the 3'-poly(A) tail of mRNA's. The protein is Poly(A) polymerase catalytic subunit (PAPL) of Myxoma virus (strain Lausanne) (MYXV).